We begin with the raw amino-acid sequence, 314 residues long: Small ribosomal subunit protein uS2c (314 aa).

This sequence belongs to the universal ribosomal protein uS2 family.

Its subcellular location is the plastid. It localises to the chloroplast. The sequence is that of Small ribosomal subunit protein uS2c (rps2) from Stigeoclonium helveticum (Green alga).